Consider the following 66-residue polypeptide: Large ribosomal subunit protein bL35 (66 aa).

The protein belongs to the bacterial ribosomal protein bL35 family.

The sequence is that of Large ribosomal subunit protein bL35 from Treponema pallidum (strain Nichols).